A 483-amino-acid polypeptide reads, in one-letter code: Protein P55 (483 aa).

A helical membrane pass occupies residues 342 to 359 (LTPVMALIIILVYYSIYG).

The protein localises to the host membrane. In Vitis vinifera (Grape), this protein is Protein P55.